We begin with the raw amino-acid sequence, 72 residues long: Teretoxin Tsu11.2 (72 aa).

Residues 1 to 21 (MMAKATMAFCFLLMLTTVMLP) form the signal peptide. Residues 22 to 30 (TEGKTIAGR) constitute a propeptide that is removed on maturation.

This sequence belongs to the teretoxin H (TH) superfamily. In terms of processing, contains 4 disulfide bonds. As to expression, expressed by the venom duct.

Its subcellular location is the secreted. This chain is Teretoxin Tsu11.2, found in Terebra subulata (Chocolate spotted auger).